The sequence spans 278 residues: 3-methyl-2-oxobutanoate hydroxymethyltransferase (278 aa).

Aspartate 49 and aspartate 88 together coordinate Mg(2+). Residues 49-50, aspartate 88, and lysine 118 each bind 3-methyl-2-oxobutanoate; that span reads DS. Residue glutamate 120 coordinates Mg(2+). Glutamate 186 (proton acceptor) is an active-site residue.

The protein belongs to the PanB family. As to quaternary structure, homodecamer; pentamer of dimers. It depends on Mg(2+) as a cofactor.

The protein localises to the cytoplasm. The enzyme catalyses 3-methyl-2-oxobutanoate + (6R)-5,10-methylene-5,6,7,8-tetrahydrofolate + H2O = 2-dehydropantoate + (6S)-5,6,7,8-tetrahydrofolate. It participates in cofactor biosynthesis; (R)-pantothenate biosynthesis; (R)-pantoate from 3-methyl-2-oxobutanoate: step 1/2. In terms of biological role, catalyzes the reversible reaction in which hydroxymethyl group from 5,10-methylenetetrahydrofolate is transferred onto alpha-ketoisovalerate to form ketopantoate. The polypeptide is 3-methyl-2-oxobutanoate hydroxymethyltransferase (Bordetella parapertussis (strain 12822 / ATCC BAA-587 / NCTC 13253)).